Reading from the N-terminus, the 938-residue chain is Respiratory burst oxidase homolog protein C (938 aa).

Residues 1–63 (MQNSENHHPH…DIGTSAGAGA (63 aa)) form a disordered region. The Cytoplasmic portion of the chain corresponds to 1–369 (MQNSENHHPH…MYFLLDNWQR (369 aa)). A coiled-coil region spans residues 115–141 (ASLVRNASSRIRQVSQELKRLASLNKR). 2 EF-hand-like regions span residues 185–195 (TAPTTGLLPRA) and 222–233 (RNITTDSINKAQ). 2 consecutive EF-hand domains span residues 245-280 (SFDTRLQTFFDMVDKDADGRITEEEVREIIGLSASA) and 289-324 (QSDEYAAMIMEELDPNNLGYIMIENLEMLLLQAPNQ). Residues D258, D260, D262, R264, and E269 each contribute to the Ca(2+) site. Residues 370-390 (VWVLLLWIGIMAVLFTWKYIQ) form a helical membrane-spanning segment. Topologically, residues 391–402 (YKQKAAYDVMGP) are extracellular. A helical membrane pass occupies residues 403-423 (CVCLAKGAAETIKLNMAIILL). One can recognise a Ferric oxidoreductase domain in the interval 408–565 (KGAAETIKLN…LFIIVYTLLI (158 aa)). Topologically, residues 424-454 (PVCRNTITWLRNKTRLGSAVPFDDNLNFHKV) are cytoplasmic. Residues 455–475 (IAVAIALGVAIHGLAHLTCDF) traverse the membrane as a helical segment. The Extracellular portion of the chain corresponds to 476-509 (PKLLNASEEAYEPMIYYFGEQPESYWWFVRGVEG). A helical transmembrane segment spans residues 510–530 (VTGIIMVVLMAIAFTLATPWF). At 531–545 (RRGRVSFPKPFHKLT) the chain is on the cytoplasmic side. Residues 546–566 (GFNAFWYSHHLFIIVYTLLIV) traverse the membrane as a helical segment. The Extracellular segment spans residues 567–580 (HGEKLYITKDWYKR). Residues 581–599 (STWMYLTVPLVLYAGERLL) traverse the membrane as a helical segment. Positions 599–727 (LRAFRSSIKA…DGPYGAPAQD (129 aa)) constitute an FAD-binding FR-type domain. Residues 600–732 (RAFRSSIKAV…APAQDYKQYE (133 aa)) are Cytoplasmic-facing. The chain crosses the membrane as a helical span at residues 733–753 (VVLLVGLGIGATPMISIVKDI). The Extracellular segment spans residues 754–938 (VNNMKAMDEE…TKFDFHKENF (185 aa)). The interval 762–796 (EEENSLENGNGMSNAAQNASPNMAQKRGKSSSASG) is disordered. Positions 767–784 (LENGNGMSNAAQNASPNM) are enriched in polar residues.

This sequence belongs to the RBOH (TC 5.B.1.3) family. Monomer and homodimer. Post-translationally, phosphorylated by CPK. Expressed in leaves.

It localises to the membrane. In terms of biological role, calcium-dependent NADPH oxidase that generates superoxide. May be responsible for the oxidative burst in response to pathogen attack in the leaves. The chain is Respiratory burst oxidase homolog protein C (RBOHC) from Solanum tuberosum (Potato).